The sequence spans 853 residues: Dynein axonemal assembly factor 5 (853 aa).

N-acetylalanine is present on Ala-2. 9 HEAT repeats span residues 69-107 (GPWA…RAAR), 200-238 (HMQS…FGSG), 240-276 (SVDD…NLRD), 278-316 (YSFL…QWQQ), 374-412 (RVKA…DEEK), 597-636 (GEAL…RPKD), 694-732 (QEAQ…NSGD), 736-774 (PEKF…CIES), and 782-820 (QSSV…LFPD).

The protein belongs to the DNAAF5 family. As to quaternary structure, interacts with DNAI2; probably involved in outer arm dynein assembly. Expressed in ciliated cells including ependymal cells lining the lateral ventricles and multiciliated epithelium of oviduct ampulla.

It localises to the cytoplasm. The protein resides in the cytoplasmic granule. Functionally, cytoplasmic protein involved in the delivery of the dynein machinery to the motile cilium. It is required for the assembly of the axonemal dynein inner and outer arms, two structures attached to the peripheral outer doublet A microtubule of the axoneme, that play a crucial role in cilium motility. This Mus musculus (Mouse) protein is Dynein axonemal assembly factor 5.